The primary structure comprises 87 residues: Neutrophil antibiotic peptide NP-3B (87 aa).

The first 19 residues, 1–19 (MRTLILLTTLLLLALHTQA), serve as a signal peptide directing secretion. Residues 20-58 (ESPQGSTKEAPDEEQDISVFFGGDKGTALQDAAVKAGVT) constitute a propeptide that is removed on maturation. Cystine bridges form between Cys59-Cys87, Cys61-Cys76, and Cys66-Cys86.

This sequence belongs to the alpha-defensin family.

Its subcellular location is the secreted. In terms of biological role, active in vitro against S.aureus, fungi, Gram-positive and Gram-negative bacteria and to a lesser extent against an enveloped virus. This is Neutrophil antibiotic peptide NP-3B from Rattus norvegicus (Rat).